Reading from the N-terminus, the 225-residue chain is Fibroblast growth factor 11 (225 aa).

Positions 1 to 28 are disordered; the sequence is MAALASSLIRQKREVREPGGSRPVSAQR.

It belongs to the heparin-binding growth factors family. Brain and eye, and in a segmental pattern of the embryonic body wall. In adult olfactory bulb, hippocampus and most concentrated in Purkinje cell layer of the cerebellum.

The protein localises to the nucleus. Its function is as follows. Probably involved in nervous system development and function. The sequence is that of Fibroblast growth factor 11 (Fgf11) from Mus musculus (Mouse).